Here is a 101-residue protein sequence, read N- to C-terminus: Protein Tat (101 aa).

The segment at 1-24 is interaction with human CREBBP; that stretch reads MDPVDPKLEPWNHPGSQPTTPCNK. The interval 1-48 is transactivation; it reads MDPVDPKLEPWNHPGSQPTTPCNKCYCKVCCWHCQVCFLNKGLGISYG. Positions 22, 25, and 27 each coordinate Zn(2+). The tract at residues 22–37 is cysteine-rich; the sequence is CNKCYCKVCCWHCQVC. The residue at position 28 (K28) is an N6-acetyllysine; by host PCAF. Residues C30, H33, C34, and C37 each contribute to the Zn(2+) site. Residues 38–48 are core; the sequence is FLNKGLGISYG. The tract at residues 48–101 is disordered; that stretch reads GRKKRRPRRGTPQGSKDHQNPVPKQPLPITSGNPTGSEKPKKEVASKTETDPLD. The Nuclear localization signal, RNA-binding (TAR), and protein transduction signature appears at 49–57; that stretch reads RKKRRPRRG. An interaction with the host capping enzyme RNGTT region spans residues 49–86; sequence RKKRRPRRGTPQGSKDHQNPVPKQPLPITSGNPTGSEK. An N6-acetyllysine; by host EP300 and GCN5L2 mark is found at K50 and K51. An asymmetric dimethylarginine; by host PRMT6 mark is found at R52 and R53. K71 participates in a covalent cross-link: Glycyl lysine isopeptide (Lys-Gly) (interchain with G-Cter in ubiquitin). Over residues 85 to 101 the composition is skewed to basic and acidic residues; that stretch reads EKPKKEVASKTETDPLD.

It belongs to the lentiviruses Tat family. As to quaternary structure, interacts with host CCNT1. Associates with the P-TEFb complex composed at least of Tat, P-TEFb (CDK9 and CCNT1), TAR RNA, RNA Pol II. Recruits the HATs CREBBP, TAF1/TFIID, EP300, PCAF and GCN5L2. Interacts with host KAT5/Tip60; this interaction targets the latter to degradation. Interacts with the host deacetylase SIRT1. Interacts with host capping enzyme RNGTT; this interaction stimulates RNGTT. Binds to host KDR, and to the host integrins ITGAV/ITGB3 and ITGA5/ITGB1. Interacts with host KPNB1/importin beta-1 without previous binding to KPNA1/importin alpha-1. Interacts with EIF2AK2. Interacts with host nucleosome assembly protein NAP1L1; this interaction may be required for the transport of Tat within the nucleus, since the two proteins interact at the nuclear rim. Interacts with host C1QBP/SF2P32; this interaction involves lysine-acetylated Tat. Interacts with the host chemokine receptors CCR2, CCR3 and CXCR4. Interacts with host DPP4/CD26; this interaction may trigger an anti-proliferative effect. Interacts with host LDLR. Interacts with the host extracellular matrix metalloproteinase MMP1. Interacts with host PRMT6; this interaction mediates Tat's methylation. Interacts with, and is ubiquitinated by MDM2/Hdm2. Interacts with host PSMC3 and HTATIP2. Interacts with STAB1; this interaction may overcome SATB1-mediated repression of IL2 and IL2RA (interleukin) in T cells by binding to the same domain than HDAC1. Interacts (when acetylated) with human CDK13, thereby increasing HIV-1 mRNA splicing and promoting the production of the doubly spliced HIV-1 protein Nef. Interacts with host TBP; this interaction modulates the activity of transcriptional pre-initiation complex. Interacts with host RELA. Interacts with host PLSCR1; this interaction negatively regulates Tat transactivation activity by altering its subcellular distribution. In terms of processing, asymmetrical arginine methylation by host PRMT6 seems to diminish the transactivation capacity of Tat and affects the interaction with host CCNT1. Post-translationally, acetylation by EP300, CREBBP, GCN5L2/GCN5 and PCAF regulates the transactivation activity of Tat. EP300-mediated acetylation of Lys-50 promotes dissociation of Tat from the TAR RNA through the competitive binding to PCAF's bromodomain. In addition, the non-acetylated Tat's N-terminus can also interact with PCAF. PCAF-mediated acetylation of Lys-28 enhances Tat's binding to CCNT1. Lys-50 is deacetylated by SIRT1. Polyubiquitination by host MDM2 does not target Tat to degradation, but activates its transactivation function and fosters interaction with CCNT1 and TAR RNA. In terms of processing, phosphorylated by EIF2AK2 on serine and threonine residues adjacent to the basic region important for TAR RNA binding and function. Phosphorylation of Tat by EIF2AK2 is dependent on the prior activation of EIF2AK2 by dsRNA.

It localises to the host nucleus. The protein resides in the host nucleolus. Its subcellular location is the host cytoplasm. The protein localises to the secreted. In terms of biological role, transcriptional activator that increases RNA Pol II processivity, thereby increasing the level of full-length viral transcripts. Recognizes a hairpin structure at the 5'-LTR of the nascent viral mRNAs referred to as the transactivation responsive RNA element (TAR) and recruits the cyclin T1-CDK9 complex (P-TEFb complex) that will in turn hyperphosphorylate the RNA polymerase II to allow efficient elongation. The CDK9 component of P-TEFb and other Tat-activated kinases hyperphosphorylate the C-terminus of RNA Pol II that becomes stabilized and much more processive. Other factors such as HTATSF1/Tat-SF1, SUPT5H/SPT5, and HTATIP2 are also important for Tat's function. Besides its effect on RNA Pol II processivity, Tat induces chromatin remodeling of proviral genes by recruiting the histone acetyltransferases (HATs) CREBBP, EP300 and PCAF to the chromatin. This also contributes to the increase in proviral transcription rate, especially when the provirus integrates in transcriptionally silent region of the host genome. To ensure maximal activation of the LTR, Tat mediates nuclear translocation of NF-kappa-B by interacting with host RELA. Through its interaction with host TBP, Tat may also modulate transcription initiation. Tat can reactivate a latently infected cell by penetrating in it and transactivating its LTR promoter. In the cytoplasm, Tat is thought to act as a translational activator of HIV-1 mRNAs. Functionally, extracellular circulating Tat can be endocytosed by surrounding uninfected cells via the binding to several surface receptors such as CD26, CXCR4, heparan sulfate proteoglycans (HSPG) or LDLR. Neurons are rarely infected, but they internalize Tat via their LDLR. Through its interaction with nuclear HATs, Tat is potentially able to control the acetylation-dependent cellular gene expression. Modulates the expression of many cellular genes involved in cell survival, proliferation or in coding for cytokines or cytokine receptors. Tat plays a role in T-cell and neurons apoptosis. Tat induced neurotoxicity and apoptosis probably contribute to neuroAIDS. Circulating Tat also acts as a chemokine-like and/or growth factor-like molecule that binds to specific receptors on the surface of the cells, affecting many cellular pathways. In the vascular system, Tat binds to ITGAV/ITGB3 and ITGA5/ITGB1 integrins dimers at the surface of endothelial cells and competes with bFGF for heparin-binding sites, leading to an excess of soluble bFGF. The protein is Protein Tat of Homo sapiens (Human).